The chain runs to 232 residues: Putative ABC transporter ATP-binding protein VNG_2317G (232 aa).

In terms of domain architecture, ABC transporter spans 2–231 (LSVRNLVHRY…GALPDAGVRP (230 aa)). 34–41 (GANGSGKT) serves as a coordination point for ATP.

The protein belongs to the ABC transporter superfamily.

Its subcellular location is the cell membrane. Its function is as follows. Probably part of an ABC transporter complex. Responsible for energy coupling to the transport system. The polypeptide is Putative ABC transporter ATP-binding protein VNG_2317G (Halobacterium salinarum (strain ATCC 700922 / JCM 11081 / NRC-1) (Halobacterium halobium)).